The chain runs to 872 residues: Alanine--tRNA ligase (872 aa).

The Zn(2+) site is built by H567, H571, C669, and H673.

Belongs to the class-II aminoacyl-tRNA synthetase family. It depends on Zn(2+) as a cofactor.

The protein localises to the cytoplasm. The catalysed reaction is tRNA(Ala) + L-alanine + ATP = L-alanyl-tRNA(Ala) + AMP + diphosphate. Its function is as follows. Catalyzes the attachment of alanine to tRNA(Ala) in a two-step reaction: alanine is first activated by ATP to form Ala-AMP and then transferred to the acceptor end of tRNA(Ala). Also edits incorrectly charged Ser-tRNA(Ala) and Gly-tRNA(Ala) via its editing domain. This Streptococcus pyogenes serotype M1 protein is Alanine--tRNA ligase.